The following is a 653-amino-acid chain: Elongation factor 4 (653 aa).

The segment at 1–30 is disordered; sequence MRTPCSQHRRDRPSAIGSQLPDADTLDTRQ. The 182-residue stretch at 50 to 231 folds into the tr-type G domain; it reads AQIRNFCIIA…EVVRQVPPPQ (182 aa). GTP contacts are provided by residues 62 to 67 and 178 to 181; these read DHGKST and NKID.

This sequence belongs to the TRAFAC class translation factor GTPase superfamily. Classic translation factor GTPase family. LepA subfamily.

The protein resides in the cell membrane. The catalysed reaction is GTP + H2O = GDP + phosphate + H(+). Required for accurate and efficient protein synthesis under certain stress conditions. May act as a fidelity factor of the translation reaction, by catalyzing a one-codon backward translocation of tRNAs on improperly translocated ribosomes. Back-translocation proceeds from a post-translocation (POST) complex to a pre-translocation (PRE) complex, thus giving elongation factor G a second chance to translocate the tRNAs correctly. Binds to ribosomes in a GTP-dependent manner. This chain is Elongation factor 4, found in Mycobacterium bovis (strain ATCC BAA-935 / AF2122/97).